We begin with the raw amino-acid sequence, 810 residues long: Bifunctional aspartokinase/homoserine dehydrogenase 2 (810 aa).

The segment at 2–252 is aspartokinase; sequence SVIAQAGAKG…VKDACLLPLL (251 aa). Residues 253–463 form an interface region; the sequence is RLDEASELAR…RAEKRIGLVL (211 aa). Residues 464-810 are homoserine dehydrogenase; that stretch reads FGKGNIGSRW…SDINRLAQLL (347 aa). 2 residues coordinate NADP(+): asparagine 468 and isoleucine 469. NAD(+) is bound by residues isoleucine 469 and valine 498. Isoleucine 469 is a binding site for NADPH. NADP(+) is bound by residues arginine 501, threonine 549, and lysine 573. Threonine 549 contributes to the NAD(+) binding site. NADPH is bound by residues threonine 549 and lysine 573. 3 residues coordinate Na(+): valine 603, alanine 605, and leucine 607. Residues glycine 658 and glutamate 661 each contribute to the NADP(+) site. L-homoserine contacts are provided by glutamate 661 and aspartate 672. Lysine 676 (proton donor) is an active-site residue. Residue glycine 791 coordinates NADP(+). Residue glycine 791 coordinates NAD(+). Glycine 791 provides a ligand contact to NADPH.

This sequence in the N-terminal section; belongs to the aspartokinase family. It in the C-terminal section; belongs to the homoserine dehydrogenase family. In terms of assembly, homotetramer. A metal cation is required as a cofactor.

It catalyses the reaction L-homoserine + NADP(+) = L-aspartate 4-semialdehyde + NADPH + H(+). It carries out the reaction L-homoserine + NAD(+) = L-aspartate 4-semialdehyde + NADH + H(+). The enzyme catalyses L-aspartate + ATP = 4-phospho-L-aspartate + ADP. The protein operates within amino-acid biosynthesis; L-lysine biosynthesis via DAP pathway; (S)-tetrahydrodipicolinate from L-aspartate: step 1/4. It functions in the pathway amino-acid biosynthesis; L-methionine biosynthesis via de novo pathway; L-homoserine from L-aspartate: step 1/3. It participates in amino-acid biosynthesis; L-methionine biosynthesis via de novo pathway; L-homoserine from L-aspartate: step 3/3. Its pathway is amino-acid biosynthesis; L-threonine biosynthesis; L-threonine from L-aspartate: step 1/5. The protein operates within amino-acid biosynthesis; L-threonine biosynthesis; L-threonine from L-aspartate: step 3/5. Its function is as follows. Bifunctional aspartate kinase and homoserine dehydrogenase that catalyzes the first and the third steps toward the synthesis of lysine, methionine and threonine from aspartate. This is Bifunctional aspartokinase/homoserine dehydrogenase 2 (metL) from Escherichia coli (strain K12).